The sequence spans 158 residues: Protein Smg homolog (158 aa).

Belongs to the Smg family.

This is Protein Smg homolog from Shewanella oneidensis (strain ATCC 700550 / JCM 31522 / CIP 106686 / LMG 19005 / NCIMB 14063 / MR-1).